We begin with the raw amino-acid sequence, 54 residues long: Snake venom 5'-nucleotidase (54 aa).

The Zn(2+) site is built by aspartate 11 and histidine 13. Residue asparagine 46 is glycosylated (N-linked (GlcNAc...) asparagine).

Belongs to the 5'-nucleotidase family. It depends on Zn(2+) as a cofactor. In terms of processing, venom 5'-nucleotidases (or a part thereof) may be released into the venom via exosome-like vesicles. They may be attached via a GPI anchor to the membrane of these vesicles. Soluble forms of 5'-nucleotidase might be released by cleavage of the ectodomain in the exosome-like vesicles or venom gland cells. In terms of tissue distribution, expressed by the venom gland.

Its subcellular location is the membrane. The catalysed reaction is a ribonucleoside 5'-phosphate + H2O = a ribonucleoside + phosphate. Its function is as follows. Hydrolyzes nucleotides into nucleosides. Snake venom 5'-nucleotidases are widely distributed among venomous snake taxa, but there is a lack of information about their biological activities. They have been shown to inhibit platelet aggregation. This effect may be due to the liberation of inhibitory AMP or adenosine by its action on ADP released upon initiation of aggregation. Venom 5'-nucleotidases are also known to synergistically act in vivo with other toxins like ADPases, phospholipases, and disintegrins to exert a more pronounced anti-coagulant effect. The polypeptide is Snake venom 5'-nucleotidase (Gloydius blomhoffii blomhoffii (Japanese mamushi)).